Consider the following 417-residue polypeptide: Transcobalamin-1 (417 aa).

An N-terminal signal peptide occupies residues 1–25 (MRQSHQLPLVGLLLFSLIPSQLCQS). The segment at 24–308 (QSCVVSEKDY…DVTKLLLVPK (285 aa)) is globular N-terminal alpha domain. Residue Asn-90 is glycosylated (N-linked (GlcNAc...) asparagine). 143 to 147 (TNYYQ) provides a ligand contact to cyanocob(III)alamin. A disulfide bond links Cys-156 and Cys-198. Residues Asn-161, Asn-166, and Asn-179 are each glycosylated (N-linked (GlcNAc...) asparagine). Asp-187 and Gln-287 together coordinate cyanocob(III)alamin. The tract at residues 309-327 (VQVNITDEPVPVVPTLSPE) is flexible linker. N-linked (GlcNAc...) asparagine glycosylation is found at Asn-312, Asn-328, Asn-345, and Asn-360. Positions 328–417 (NISVIYCVKI…GIMLSKMESI (90 aa)) are globular C-terminal beta domain. Residues 376–377 (YI) and 393–395 (WEH) each bind cyanocob(III)alamin.

This sequence belongs to the eukaryotic cobalamin transport proteins family. Contains about 30% carbohydrates. Haptocorrins are a family of cobalamin-binding glycoproteins found in blood, salivary and mucosal secretions.

The protein resides in the secreted. In terms of biological role, binds vitamin B12 with femtomolar affinity and protects it from the acidic environment of the stomach. Binds to cobalamin and to cobalamin analogs such as cobinamide. This chain is Transcobalamin-1 (TCN1), found in Sus scrofa (Pig).